We begin with the raw amino-acid sequence, 256 residues long: Hydroxyacylglutathione hydrolase (256 aa).

Histidine 53, histidine 55, aspartate 57, histidine 58, histidine 111, aspartate 128, and histidine 166 together coordinate Zn(2+).

The protein belongs to the metallo-beta-lactamase superfamily. Glyoxalase II family. As to quaternary structure, monomer. It depends on Zn(2+) as a cofactor.

It catalyses the reaction an S-(2-hydroxyacyl)glutathione + H2O = a 2-hydroxy carboxylate + glutathione + H(+). It participates in secondary metabolite metabolism; methylglyoxal degradation; (R)-lactate from methylglyoxal: step 2/2. Thiolesterase that catalyzes the hydrolysis of S-D-lactoyl-glutathione to form glutathione and D-lactic acid. This chain is Hydroxyacylglutathione hydrolase, found in Thiobacillus denitrificans (strain ATCC 25259 / T1).